Consider the following 250-residue polypeptide: 5'-nucleotidase SurE (250 aa).

Residues aspartate 8, aspartate 9, serine 40, and asparagine 94 each coordinate a divalent metal cation.

Belongs to the SurE nucleotidase family. A divalent metal cation is required as a cofactor.

It localises to the cytoplasm. It carries out the reaction a ribonucleoside 5'-phosphate + H2O = a ribonucleoside + phosphate. Its function is as follows. Nucleotidase that shows phosphatase activity on nucleoside 5'-monophosphates. The polypeptide is 5'-nucleotidase SurE (Wolbachia sp. subsp. Brugia malayi (strain TRS)).